The primary structure comprises 231 residues: Transcriptional regulator NRG1 (231 aa).

Position 163 is a phosphoserine (serine 163). 2 consecutive C2H2-type zinc fingers follow at residues 174–196 (YICK…NRIH) and 202–226 (HCCP…YRTH).

It localises to the nucleus. Transcriptional repressor involved in regulation of glucose repression. Binds to UAS-1 in the STA1 promoter. This chain is Transcriptional regulator NRG1 (NRG1), found in Saccharomyces cerevisiae (strain ATCC 204508 / S288c) (Baker's yeast).